Consider the following 249-residue polypeptide: Methionine aminopeptidase 2 (249 aa).

A substrate-binding site is contributed by H76. 3 residues coordinate a divalent metal cation: D94, D105, and H168. Position 175 (H175) interacts with substrate. E202 and E233 together coordinate a divalent metal cation.

In terms of assembly, monomer. Co(2+) serves as cofactor. Zn(2+) is required as a cofactor. The cofactor is Mn(2+). It depends on Fe(2+) as a cofactor.

The protein resides in the cytoplasm. The enzyme catalyses Release of N-terminal amino acids, preferentially methionine, from peptides and arylamides.. Its function is as follows. Removes the N-terminal methionine from nascent proteins. The N-terminal methionine is often cleaved when the second residue in the primary sequence is small and uncharged (Met-Ala-, Cys, Gly, Pro, Ser, Thr, or Val). Requires deformylation of the N(alpha)-formylated initiator methionine before it can be hydrolyzed. The polypeptide is Methionine aminopeptidase 2 (Bacillus subtilis (strain 168)).